Reading from the N-terminus, the 390-residue chain is Methylthioribose-1-phosphate isomerase (390 aa).

Catalysis depends on D263, which acts as the Proton donor.

This sequence belongs to the eIF-2B alpha/beta/delta subunits family. MtnA subfamily.

Its subcellular location is the cytoplasm. The protein localises to the nucleus. The catalysed reaction is 5-(methylsulfanyl)-alpha-D-ribose 1-phosphate = 5-(methylsulfanyl)-D-ribulose 1-phosphate. It functions in the pathway amino-acid biosynthesis; L-methionine biosynthesis via salvage pathway; L-methionine from S-methyl-5-thio-alpha-D-ribose 1-phosphate: step 1/6. Catalyzes the interconversion of methylthioribose-1-phosphate (MTR-1-P) into methylthioribulose-1-phosphate (MTRu-1-P). This chain is Methylthioribose-1-phosphate isomerase, found in Meyerozyma guilliermondii (strain ATCC 6260 / CBS 566 / DSM 6381 / JCM 1539 / NBRC 10279 / NRRL Y-324) (Yeast).